A 34-amino-acid chain; its full sequence is Photosystem II reaction center protein M (34 aa).

Residues 5-25 traverse the membrane as a helical segment; the sequence is ILAFIATALFILIPTAFLLIL.

The protein belongs to the PsbM family. As to quaternary structure, PSII is composed of 1 copy each of membrane proteins PsbA, PsbB, PsbC, PsbD, PsbE, PsbF, PsbH, PsbI, PsbJ, PsbK, PsbL, PsbM, PsbT, PsbX, PsbY, PsbZ, Psb30/Ycf12, at least 3 peripheral proteins of the oxygen-evolving complex and a large number of cofactors. It forms dimeric complexes.

The protein localises to the plastid. Its subcellular location is the chloroplast thylakoid membrane. In terms of biological role, one of the components of the core complex of photosystem II (PSII). PSII is a light-driven water:plastoquinone oxidoreductase that uses light energy to abstract electrons from H(2)O, generating O(2) and a proton gradient subsequently used for ATP formation. It consists of a core antenna complex that captures photons, and an electron transfer chain that converts photonic excitation into a charge separation. This subunit is found at the monomer-monomer interface. This is Photosystem II reaction center protein M from Anthoceros angustus (Hornwort).